Consider the following 170-residue polypeptide: Odorant-binding protein 2a (170 aa).

The N-terminal stretch at 1 to 15 (MKTLFLGVTLGLAAA) is a signal peptide. Cys74 and Cys166 are disulfide-bonded.

It belongs to the calycin superfamily. Lipocalin family. As to quaternary structure, monomer. In terms of tissue distribution, strongly expressed in the nasal structures, salivary and lachrymal glands, and lung. Expressed in the liver.

Its subcellular location is the secreted. Functionally, binds and transports small hydrophobic volatile molecules with a higher affinity for aldehydes and large fatty acids, including undecanal, palmitic acid, efficient aldehydes, benzenic aldehydes, heterocyclic aldehydes and aliphatic acids. This chain is Odorant-binding protein 2a (OBP2A), found in Homo sapiens (Human).